The primary structure comprises 137 residues: Small ribosomal subunit protein uS12 (137 aa).

Positions methionine 1–serine 25 are disordered. Residue aspartate 102 is modified to 3-methylthioaspartic acid.

This sequence belongs to the universal ribosomal protein uS12 family. As to quaternary structure, part of the 30S ribosomal subunit. Contacts proteins S8 and S17. May interact with IF1 in the 30S initiation complex.

Functionally, with S4 and S5 plays an important role in translational accuracy. Interacts with and stabilizes bases of the 16S rRNA that are involved in tRNA selection in the A site and with the mRNA backbone. Located at the interface of the 30S and 50S subunits, it traverses the body of the 30S subunit contacting proteins on the other side and probably holding the rRNA structure together. The combined cluster of proteins S8, S12 and S17 appears to hold together the shoulder and platform of the 30S subunit. This Finegoldia magna (strain ATCC 29328 / DSM 20472 / WAL 2508) (Peptostreptococcus magnus) protein is Small ribosomal subunit protein uS12.